Consider the following 379-residue polypeptide: MAKKDYYEILGVSRNASQEEIRQAYKQLIKKWHPDRNHQNRKEAEEKFKEIQEAYEVLSDPEKRAMYDRFGYVGDVPPNAGSGGGFGGFGGFGGFEDIFKDFGDFINNDIFNIFFGDQRTSSRQKQRRAKRGEDINITVDVPFEQVFTGTTIPIEYDRYEVCSHCNGEGVEPGSGWVSCPKCHGTGVVREERRTFLGVIVNQYTCNQCGGTGKIPGETCHVCGGSGRIRKRHRVEVKIPAGVDNGTVIRVQGKGNAGYNGGGYGDLYVNVRITGHIDFERRGNDLIKEIKIDYVEAILGTKVKIKMPDGRVKEVKIPSGVQDGENIYVYGEGVPDMRTGRRGDLILKIKVDIPKRVSRSEKKLLKEIAKLRGKDVDEEE.

The 67-residue stretch at Asp5–Gly71 folds into the J domain. A CR-type zinc finger spans residues Gly149–Arg231. The Zn(2+) site is built by Cys162, Cys165, Cys179, Cys182, Cys205, Cys208, Cys219, and Cys222. CXXCXGXG motif repeat units lie at residues Cys162–Gly169, Cys179–Gly186, Cys205–Gly212, and Cys219–Gly226.

This sequence belongs to the DnaJ family. In terms of assembly, homodimer. Zn(2+) serves as cofactor.

It localises to the cytoplasm. Its function is as follows. Participates actively in the response to hyperosmotic and heat shock by preventing the aggregation of stress-denatured proteins and by disaggregating proteins, also in an autonomous, DnaK-independent fashion. Unfolded proteins bind initially to DnaJ; upon interaction with the DnaJ-bound protein, DnaK hydrolyzes its bound ATP, resulting in the formation of a stable complex. GrpE releases ADP from DnaK; ATP binding to DnaK triggers the release of the substrate protein, thus completing the reaction cycle. Several rounds of ATP-dependent interactions between DnaJ, DnaK and GrpE are required for fully efficient folding. Also involved, together with DnaK and GrpE, in the DNA replication of plasmids through activation of initiation proteins. This Thermosipho africanus (strain TCF52B) protein is Chaperone protein DnaJ.